Reading from the N-terminus, the 469-residue chain is Siroheme synthase (469 aa).

Residues 1–203 (MDYLPIFTDL…GQEQDAKQEL (203 aa)) are precorrin-2 dehydrogenase /sirohydrochlorin ferrochelatase. NAD(+) contacts are provided by residues 22–23 (DV) and 43–44 (PV). The residue at position 128 (serine 128) is a Phosphoserine. The uroporphyrinogen-III C-methyltransferase stretch occupies residues 214–469 (GQVALIGSGP…LQQSAVVKLA (256 aa)). Residue proline 223 participates in S-adenosyl-L-methionine binding. The Proton acceptor role is filled by aspartate 246. Residue lysine 268 is the Proton donor of the active site. S-adenosyl-L-methionine contacts are provided by residues 299–301 (GGD), valine 304, 329–330 (TA), methionine 381, and glycine 410.

The protein in the N-terminal section; belongs to the precorrin-2 dehydrogenase / sirohydrochlorin ferrochelatase family. It in the C-terminal section; belongs to the precorrin methyltransferase family.

The catalysed reaction is uroporphyrinogen III + 2 S-adenosyl-L-methionine = precorrin-2 + 2 S-adenosyl-L-homocysteine + H(+). It carries out the reaction precorrin-2 + NAD(+) = sirohydrochlorin + NADH + 2 H(+). The enzyme catalyses siroheme + 2 H(+) = sirohydrochlorin + Fe(2+). Its pathway is cofactor biosynthesis; adenosylcobalamin biosynthesis; precorrin-2 from uroporphyrinogen III: step 1/1. It participates in cofactor biosynthesis; adenosylcobalamin biosynthesis; sirohydrochlorin from precorrin-2: step 1/1. It functions in the pathway porphyrin-containing compound metabolism; siroheme biosynthesis; precorrin-2 from uroporphyrinogen III: step 1/1. The protein operates within porphyrin-containing compound metabolism; siroheme biosynthesis; siroheme from sirohydrochlorin: step 1/1. Its pathway is porphyrin-containing compound metabolism; siroheme biosynthesis; sirohydrochlorin from precorrin-2: step 1/1. In terms of biological role, multifunctional enzyme that catalyzes the SAM-dependent methylations of uroporphyrinogen III at position C-2 and C-7 to form precorrin-2 via precorrin-1. Then it catalyzes the NAD-dependent ring dehydrogenation of precorrin-2 to yield sirohydrochlorin. Finally, it catalyzes the ferrochelation of sirohydrochlorin to yield siroheme. The sequence is that of Siroheme synthase from Photobacterium profundum (strain SS9).